The chain runs to 151 residues: uncharacterized protein (151 aa).

Residues C24, C27, C92, and C129 each coordinate [4Fe-4S] cluster.

This sequence belongs to the complex I 20 kDa subunit family. Requires [4Fe-4S] cluster as cofactor.

This is an uncharacterized protein from Methanocaldococcus jannaschii (strain ATCC 43067 / DSM 2661 / JAL-1 / JCM 10045 / NBRC 100440) (Methanococcus jannaschii).